A 467-amino-acid polypeptide reads, in one-letter code: Cilia- and flagella-associated protein 97 (467 aa).

Disordered regions lie at residues 1–20 (MDRY…FFDS), 76–235 (IAKP…DISP), 336–370 (RQAA…KEQQ), and 412–467 (ALSP…AAWQ). The span at 124-135 (DNYYPDEEDSSE) shows a compositional bias: acidic residues. Polar residues predominate over residues 162–177 (DFVSTISSSDTEYSDT). The span at 180 to 194 (DDGASKSSYQSSKGS) shows a compositional bias: low complexity. Over residues 198-216 (SPERKPSRSSMRELRHYAE) the composition is skewed to basic and acidic residues. Over residues 223-235 (TDVTPLSTPDISP) the composition is skewed to polar residues. Positions 310 to 387 (KKNFSFSNDE…ALLKRLESVK (78 aa)) form a coiled coil. The segment covering 421–439 (SVSRLSPSVSSGGFSRMSS) has biased composition (low complexity).

Belongs to the CFAP97 family.

This Xenopus tropicalis (Western clawed frog) protein is Cilia- and flagella-associated protein 97.